A 341-amino-acid polypeptide reads, in one-letter code: Farnesyl pyrophosphate synthase (341 aa).

The isopentenyl diphosphate site is built by Lys-48, Arg-51, and Gln-86. Mg(2+) is bound by residues Asp-93 and Asp-97. A dimethylallyl diphosphate-binding site is contributed by Arg-102. Residue Arg-103 coordinates isopentenyl diphosphate. Dimethylallyl diphosphate contacts are provided by Lys-190, Thr-191, Gln-229, and Lys-246.

This sequence belongs to the FPP/GGPP synthase family. The cofactor is Mg(2+).

The protein resides in the cytoplasm. The catalysed reaction is isopentenyl diphosphate + dimethylallyl diphosphate = (2E)-geranyl diphosphate + diphosphate. It catalyses the reaction isopentenyl diphosphate + (2E)-geranyl diphosphate = (2E,6E)-farnesyl diphosphate + diphosphate. Its pathway is isoprenoid biosynthesis; farnesyl diphosphate biosynthesis; farnesyl diphosphate from geranyl diphosphate and isopentenyl diphosphate: step 1/1. The protein operates within isoprenoid biosynthesis; geranyl diphosphate biosynthesis; geranyl diphosphate from dimethylallyl diphosphate and isopentenyl diphosphate: step 1/1. Functionally, catalyzes the sequential condensation of isopentenyl pyrophosphate with the allylic pyrophosphates, dimethylallyl pyrophosphate, and then with the resultant geranylpyrophosphate to the ultimate product farnesyl pyrophosphate. The chain is Farnesyl pyrophosphate synthase (FPS1) from Helianthus annuus (Common sunflower).